A 130-amino-acid polypeptide reads, in one-letter code: Small ribosomal subunit protein uS11 (130 aa).

It belongs to the universal ribosomal protein uS11 family. As to quaternary structure, part of the 30S ribosomal subunit. Interacts with proteins S7 and S18. Binds to IF-3.

In terms of biological role, located on the platform of the 30S subunit, it bridges several disparate RNA helices of the 16S rRNA. Forms part of the Shine-Dalgarno cleft in the 70S ribosome. In Synechococcus sp. (strain WH7803), this protein is Small ribosomal subunit protein uS11.